The following is a 330-amino-acid chain: uncharacterized protein (330 aa).

10 helical membrane passes run 15–35, 41–61, 72–92, 102–122, 125–145, 175–195, 201–221, 238–258, 264–284, and 286–306; these read LTLI…KGVL, FFVA…WAMG, GWGW…GFLA, LGSV…SWLF, VIGG…SLIG, LWML…PFVS, VVAT…IALV, LAYA…YLAS, SLSS…NLIL, and EQLS…IYLI. 2 consecutive EamA domains span residues 22–146 and 182–308; these read FLWG…LIGL and LSMA…LINQ.

The protein belongs to the EamA transporter family.

It localises to the cell membrane. This is an uncharacterized protein from Synechocystis sp. (strain ATCC 27184 / PCC 6803 / Kazusa).